A 426-amino-acid chain; its full sequence is Putative phosphate permease CPn_0680/CP_0067/CPj0680/CpB0707 (426 aa).

The next 11 membrane-spanning stretches (helical) occupy residues 1–21 (MLPLIIFVLLCGFYTSWNIGA), 42–62 (AVVIAAIFEFFGALLLGDRVA), 87–107 (TAALLATGVWLQLASFFGWPV), 112–132 (SIVGAVIGFGLVLGKGTIIYW), 137–157 (IILISWILSPFMGGCVAYLIF), 180–200 (FLAALVIMTLGTVMISGGVIL), 207–227 (WAVSGVLVCGLLSYIITFYYV), 260–280 (LVVERIFAYLQIIVACFMAFA), 313–333 (LMAFGGIGLVIGLAIWGWRVI), 364–384 (ILGLPISTTHVVVGAVLGIGL), and 399–419 (IVLSWFITLPAGALLSILFFF).

Belongs to the inorganic phosphate transporter (PiT) (TC 2.A.20) family.

It localises to the cell membrane. Its function is as follows. Potential transporter for phosphate. The polypeptide is Putative phosphate permease CPn_0680/CP_0067/CPj0680/CpB0707 (Chlamydia pneumoniae (Chlamydophila pneumoniae)).